A 430-amino-acid chain; its full sequence is Carbamoyl phosphate synthase small chain, chloroplastic (430 aa).

Residues 1–35 constitute a chloroplast transit peptide; sequence MAMATRTLGFVLPTSLSSQPSFDRRGGGFRVSVIR. A Glutamine amidotransferase type-1 domain is found at 243 to 429; the sequence is KVIAYDFGIK…IELMKRSKQS (187 aa). The Nucleophile role is filled by Cys318. Active-site residues include His402 and Glu404.

The protein belongs to the CarA family. In terms of assembly, heterodimer composed of 2 chains; the small (or glutamine) chain promotes the hydrolysis of glutamine to ammonia, which is used by the large (or ammonia) chain to synthesize carbamoyl phosphate.

It is found in the plastid. The protein resides in the chloroplast. It catalyses the reaction hydrogencarbonate + L-glutamine + 2 ATP + H2O = carbamoyl phosphate + L-glutamate + 2 ADP + phosphate + 2 H(+). The catalysed reaction is L-glutamine + H2O = L-glutamate + NH4(+). It participates in amino-acid biosynthesis; L-arginine biosynthesis; carbamoyl phosphate from bicarbonate: step 1/1. It functions in the pathway pyrimidine metabolism; UMP biosynthesis via de novo pathway; (S)-dihydroorotate from bicarbonate: step 1/3. Its function is as follows. Small subunit of the arginine-specific carbamoyl phosphate synthase (CPSase). CPSase catalyzes the formation of carbamoyl phosphate from the ammonia moiety of glutamine, carbonate, and phosphate donated by ATP, the first step of the arginine biosynthetic pathway. The small subunit (glutamine amidotransferase) binds and cleaves glutamine to supply the large subunit with the substrate ammonia. The polypeptide is Carbamoyl phosphate synthase small chain, chloroplastic (CARA) (Arabidopsis thaliana (Mouse-ear cress)).